A 193-amino-acid chain; its full sequence is dTTP/UTP pyrophosphatase (193 aa).

The active-site Proton acceptor is D73.

This sequence belongs to the Maf family. YhdE subfamily. The cofactor is a divalent metal cation.

The protein resides in the cytoplasm. The catalysed reaction is dTTP + H2O = dTMP + diphosphate + H(+). It carries out the reaction UTP + H2O = UMP + diphosphate + H(+). Nucleoside triphosphate pyrophosphatase that hydrolyzes dTTP and UTP. May have a dual role in cell division arrest and in preventing the incorporation of modified nucleotides into cellular nucleic acids. This chain is dTTP/UTP pyrophosphatase, found in Caulobacter vibrioides (strain ATCC 19089 / CIP 103742 / CB 15) (Caulobacter crescentus).